We begin with the raw amino-acid sequence, 208 residues long: Riboflavin synthase (208 aa).

2 Lumazine-binding repeats span residues 1-97 and 98-195; these read MFTG…MGGH and FVQG…EKLV. 2,4-dihydroxypteridine contacts are provided by residues 4–6, 48–50, 62–67, 101–103, lysine 137, 146–148, and 160–165; these read GLV, CLT, GIAPES, GHV, SLT, and MMISYT.

Homotrimer.

It carries out the reaction 2 6,7-dimethyl-8-(1-D-ribityl)lumazine + H(+) = 5-amino-6-(D-ribitylamino)uracil + riboflavin. The protein operates within cofactor biosynthesis; riboflavin biosynthesis; riboflavin from 2-hydroxy-3-oxobutyl phosphate and 5-amino-6-(D-ribitylamino)uracil: step 2/2. Its function is as follows. Catalyzes the dismutation of two molecules of 6,7-dimethyl-8-ribityllumazine, resulting in the formation of riboflavin and 5-amino-6-(D-ribitylamino)uracil. This is Riboflavin synthase (rib5) from Schizosaccharomyces pombe (strain 972 / ATCC 24843) (Fission yeast).